The primary structure comprises 381 residues: Acetylornithine deacetylase (381 aa).

Zn(2+) is bound at residue histidine 79. Residue aspartate 81 is part of the active site. Aspartate 111 is a Zn(2+) binding site. Glutamate 143 is a catalytic residue. Glutamate 144, glutamate 168, and histidine 354 together coordinate Zn(2+).

This sequence belongs to the peptidase M20A family. ArgE subfamily. In terms of assembly, homodimer. The cofactor is Zn(2+). Requires Co(2+) as cofactor. Glutathione serves as cofactor.

The protein localises to the cytoplasm. It carries out the reaction N(2)-acetyl-L-ornithine + H2O = L-ornithine + acetate. The protein operates within amino-acid biosynthesis; L-arginine biosynthesis; L-ornithine from N(2)-acetyl-L-ornithine (linear): step 1/1. Its function is as follows. Catalyzes the hydrolysis of the amide bond of N(2)-acetylated L-amino acids. Cleaves the acetyl group from N-acetyl-L-ornithine to form L-ornithine, an intermediate in L-arginine biosynthesis pathway, and a branchpoint in the synthesis of polyamines. The chain is Acetylornithine deacetylase from Buchnera aphidicola subsp. Acyrthosiphon pisum (strain Tuc7).